We begin with the raw amino-acid sequence, 158 residues long: Cytochrome c-type biogenesis protein CcmE (158 aa).

A compositionally biased stretch (polar residues) spans 1–11 (MTRPDSGSSPA). The interval 1 to 20 (MTRPDSGSSPAPLSEARRRK) is disordered. Residues 1 to 23 (MTRPDSGSSPAPLSEARRRKRNP) are Cytoplasmic-facing. The helical; Signal-anchor for type II membrane protein transmembrane segment at 24–44 (LPTVLGITALLGLAGFIAFGN) threads the bilayer. Topologically, residues 45–158 (LNKSLEYFVT…ELRDLLEQSE (114 aa)) are extracellular. Histidine 137 and tyrosine 141 together coordinate heme.

Belongs to the CcmE/CycJ family.

It is found in the cell membrane. In terms of biological role, heme chaperone required for the biogenesis of c-type cytochromes. Transiently binds heme delivered by CcmC and transfers the heme to apo-cytochromes in a process facilitated by CcmF and CcmH. This is Cytochrome c-type biogenesis protein CcmE from Deinococcus deserti (strain DSM 17065 / CIP 109153 / LMG 22923 / VCD115).